The primary structure comprises 521 residues: Formate--tetrahydrofolate ligase (521 aa).

This sequence belongs to the formate--tetrahydrofolate ligase family.

It carries out the reaction (6S)-5,6,7,8-tetrahydrofolate + formate + ATP = (6R)-10-formyltetrahydrofolate + ADP + phosphate. Its pathway is one-carbon metabolism; tetrahydrofolate interconversion. The chain is Formate--tetrahydrofolate ligase from Ureaplasma parvum serovar 3 (strain ATCC 700970).